Here is a 231-residue protein sequence, read N- to C-terminus: MKIAVIGAMEEEVTILRDQLKNATQENIAGCEFTTGVYEDKEVILLKSGIGKVNAAVSTTLLLDRFQPDYVINTGSAGGFHHTLNVGDIVISTDVRHHDVDVTIFNYEYGQVPGLPAAFVADEKLVKLAEESALEIDHIQVAKGTIATGDSFMNDPNRVAFVREKFPELYAVEMEAAAVAQVCQLFGTPFVVVRALSDIAGKESNVSFDQFLEQAAIHSTDLVLRMIKQTQ.

E12 functions as the Proton acceptor in the catalytic mechanism. Residues G78, M153, and M174 to E175 contribute to the substrate site. D198 functions as the Proton donor in the catalytic mechanism.

Belongs to the PNP/UDP phosphorylase family. MtnN subfamily.

It catalyses the reaction S-adenosyl-L-homocysteine + H2O = S-(5-deoxy-D-ribos-5-yl)-L-homocysteine + adenine. The enzyme catalyses S-methyl-5'-thioadenosine + H2O = 5-(methylsulfanyl)-D-ribose + adenine. It carries out the reaction 5'-deoxyadenosine + H2O = 5-deoxy-D-ribose + adenine. The protein operates within amino-acid biosynthesis; L-methionine biosynthesis via salvage pathway; S-methyl-5-thio-alpha-D-ribose 1-phosphate from S-methyl-5'-thioadenosine (hydrolase route): step 1/2. Its function is as follows. Catalyzes the irreversible cleavage of the glycosidic bond in both 5'-methylthioadenosine (MTA) and S-adenosylhomocysteine (SAH/AdoHcy) to adenine and the corresponding thioribose, 5'-methylthioribose and S-ribosylhomocysteine, respectively. Also cleaves 5'-deoxyadenosine, a toxic by-product of radical S-adenosylmethionine (SAM) enzymes, into 5-deoxyribose and adenine. This is 5'-methylthioadenosine/S-adenosylhomocysteine nucleosidase from Bacillus pumilus (strain SAFR-032).